A 250-amino-acid chain; its full sequence is Histone H1.3 (250 aa).

Disordered stretches follow at residues 17-53 and 104-250; these read AASG…QMVD and QTKG…ATKK. A compositionally biased stretch (low complexity) spans 27–42; it reads KKAAATPKSKKSTAAP. Residues 44–118 form the H15 domain; that stretch reads SHPPTQQMVD…GASGSFKLSR (75 aa). The span at 120–133 shows a compositional bias: basic and acidic residues; it reads AKKDAKPKASAVEK. The segment covering 138-161 has biased composition (low complexity); sequence VNASAAAATKRSSSTSTTKKAAGA. Over residues 174-191 the composition is skewed to basic and acidic residues; sequence KNVEKKKADKEKAKDAKK. The segment covering 192 to 234 has biased composition (low complexity); the sequence is TGTIKAKLTTAKAKSSATKPKTPKPKTTSAKPKKVVSATTPKK. Residues 235 to 250 show a composition bias toward basic residues; sequence TAVKKPKAKTASATKK.

It belongs to the histone H1/H5 family.

Its subcellular location is the nucleus. It is found in the chromosome. Its function is as follows. Histones H1 are necessary for the condensation of nucleosome chains into higher-order structures. This is Histone H1.3 (His1.3) from Drosophila virilis (Fruit fly).